A 391-amino-acid polypeptide reads, in one-letter code: AN1-type zinc finger and UBX domain-containing protein DDB_G0268260 (391 aa).

Over residues 1–16 the composition is skewed to low complexity; that stretch reads MQQQSPPTAPQQQQQQ. A disordered region spans residues 1-20; it reads MQQQSPPTAPQQQQQQQRER. AN1-type zinc fingers lie at residues 26–74 and 118–166; these read DHIG…QREN and APKS…IINS. Residues cysteine 32, cysteine 37, cysteine 47, cysteine 50, cysteine 55, histidine 58, histidine 64, cysteine 66, cysteine 124, cysteine 129, cysteine 139, cysteine 142, cysteine 147, histidine 150, histidine 156, and cysteine 158 each coordinate Zn(2+). Residues 185 to 236 show a composition bias toward low complexity; that stretch reads NINNNINNNKNNNNNNNNNNNNNNNNNNNNNNNNNNNNNNNNNNNNNSNNNN. The segment at 185 to 240 is disordered; sequence NINNNINNNKNNNNNNNNNNNNNNNNNNNNNNNNNNNNNNNNNNNNNSNNNNKLIY. One can recognise a UBX domain in the interval 278–356; it reads SSEEIGEIGI…GLLPVSTLYM (79 aa).

The chain is AN1-type zinc finger and UBX domain-containing protein DDB_G0268260 from Dictyostelium discoideum (Social amoeba).